Here is an 838-residue protein sequence, read N- to C-terminus: Histidine biosynthesis trifunctional protein (838 aa).

Positions 1–271 are phosphoribosyl-AMP cyclohydrolase; the sequence is MIFPILPVIS…MVEPRTGYGF (271 aa). The segment at 272 to 360 is phosphoribosyl-ATP pyrophosphohydrolase; the sequence is CHRETKFTCF…VYFAMVWCIK (89 aa). Residues 361–838 form a histidinol dehydrogenase region; the sequence is HGVRLADIEK…IRMERMAETK (478 aa). Zn(2+)-binding residues include glutamine 660 and histidine 663. Catalysis depends on residues glutamate 729 and histidine 730. Aspartate 764 and histidine 823 together coordinate Zn(2+).

It in the C-terminal section; belongs to the histidinol dehydrogenase family. Requires Zn(2+) as cofactor.

It carries out the reaction 1-(5-phospho-beta-D-ribosyl)-5'-AMP + H2O = 1-(5-phospho-beta-D-ribosyl)-5-[(5-phospho-beta-D-ribosylamino)methylideneamino]imidazole-4-carboxamide. The catalysed reaction is 1-(5-phospho-beta-D-ribosyl)-ATP + H2O = 1-(5-phospho-beta-D-ribosyl)-5'-AMP + diphosphate + H(+). The enzyme catalyses L-histidinol + 2 NAD(+) + H2O = L-histidine + 2 NADH + 3 H(+). It participates in amino-acid biosynthesis; L-histidine biosynthesis; L-histidine from 5-phospho-alpha-D-ribose 1-diphosphate: step 2/9. Its pathway is amino-acid biosynthesis; L-histidine biosynthesis; L-histidine from 5-phospho-alpha-D-ribose 1-diphosphate: step 3/9. The protein operates within amino-acid biosynthesis; L-histidine biosynthesis; L-histidine from 5-phospho-alpha-D-ribose 1-diphosphate: step 9/9. This Candida albicans (Yeast) protein is Histidine biosynthesis trifunctional protein (HIS4).